Reading from the N-terminus, the 63-residue chain is Prokaryotic ubiquitin-like protein UBact (63 aa).

Positions 1–63 (MSGRSTFGRF…SRRYRQRTGE (63 aa)) are disordered. Basic and acidic residues predominate over residues 17-50 (PWERKPGDDEGGPKRPKVERPDTNDLLKRMRRVD). Glutamate 63 is covalently cross-linked (Isoglutamyl lysine isopeptide (Glu-Lys) (interchain with K-? in acceptor proteins)).

This sequence belongs to the ubiquitin-like protein UBact family.

May function as a protein modifier covalently attached to lysine residues of substrate proteins. This may serve to target the modified proteins for degradation by proteasomes. The chain is Prokaryotic ubiquitin-like protein UBact from Handelsmanbacteria sp. (strain RIFCSPLOWO2_12_FULL_64_10).